The following is an 886-amino-acid chain: MSGTEEDLCHRMKVVVRVRPENTKEKAVQFCKVVHVVDKHILSFDPKQEEISFFHRKKTTNFDITKRQNKDLKFVFDAVFDETSTQMEVFEHTTKPILHSFLNGYNCTVFAYGATGSGKTHTMLGSAAEPGVMYLTMLDLFKCIDEIKEEKECSTAVSYLEVYNEQIRDLLTNSGPLAVREDSQKGVVVQGLTLHQPKSSEEILQLLDNGNKNRTQHPTDVNAVSSRSHAVFQIYLRQQDKTASINQNVRIAKMSLIDLAGSERASVSGAKGSRFVEGTNINKSLLALGNVINALANTKRRNQHIPYRNSKLTRLLKDSLGGNCQTIMIAAVSPSSLFYDDTYNTLKYANRAKEIKSSLKSNVLNLNSHISQYVKICNMQKAEILMLKEKLKAYEEQKALSDRNDCAKLVHSNPEDRETERFQEILNCLFQNREGIRQEYLKLEMLLKANALKSSYHQQCHKQIEMMCSEDKVEKATCKRDHRLEKLKTNSCFLEKKKEEVSKQFDENTNWLHRVENEMRLLGQNGDIPEALNKELHCHHLHLQNKELKTQMAHMTALACLQEQQHKQTEAVLNALLPVLRKQYWKLKETGLSNAAFDSDFKDIEHLVERKKVVAWADQTNEHSNRNDLPGISLLMTFPQLEPIQSISCCTSVSDPNVLKLTPQRRTRRKIIPSPLKVQHTQKSALSESTQLNDSFSKELQPIVYTPEDCKKAQDLFPSLTRTSSQSANVMNDNSQKALCRIESPLSRTECKQGLYSTSTLCDSIRGLKNKWPEQEPLASSKSSVHRIESSSFSTKDSMPESAGVPSYMAMTTAAKRKWKQMSSTSNASIKSDESCGFAKRIRRDNSSVKPMQENRLKVGYKRNTNKTNSNMLRKFRRNTSKENVQ.

Residues 11 to 355 form the Kinesin motor domain; that stretch reads RMKVVVRVRP…LKYANRAKEI (345 aa). Residue Lys-24 forms a Glycyl lysine isopeptide (Lys-Gly) (interchain with G-Cter in SUMO2) linkage. 113–120 serves as a coordination point for ATP; sequence GATGSGKT. Positions 370 to 404 form a coiled coil; it reads ISQYVKICNMQKAEILMLKEKLKAYEEQKALSDRN. Ser-674 carries the post-translational modification Phosphoserine. A Glycyl lysine isopeptide (Lys-Gly) (interchain with G-Cter in SUMO2) cross-link involves residue Lys-683. Phosphoserine is present on Ser-695. The disordered stretch occupies residues 774–804; that stretch reads EQEPLASSKSSVHRIESSSFSTKDSMPESAG. A Glycyl lysine isopeptide (Lys-Gly) (interchain with G-Cter in SUMO2) cross-link involves residue Lys-782. Phosphoserine is present on Ser-826. A Glycyl lysine isopeptide (Lys-Gly) (interchain with G-Cter in SUMO2) cross-link involves residue Lys-862. The interval 862 to 886 is disordered; it reads KRNTNKTNSNMLRKFRRNTSKENVQ.

Belongs to the TRAFAC class myosin-kinesin ATPase superfamily. Kinesin family. Interacts with CENPE and ESR1. Post-translationally, glycosylated. In terms of processing, ubiquitinated.

The protein resides in the cell projection. The protein localises to the ruffle. Its subcellular location is the cytoplasm. It localises to the nucleus. It is found in the cytoskeleton. The protein resides in the microtubule organizing center. The protein localises to the centrosome. In terms of biological role, microtubule-depolymerizing kinesin which plays a role in chromosome congression by reducing the amplitude of preanaphase oscillations and slowing poleward movement during anaphase, thus suppressing chromosome movements. May stabilize the CENPE-BUB1B complex at the kinetochores during early mitosis and maintains CENPE levels at kinetochores during chromosome congression. The protein is Kinesin-like protein KIF18A (Kif18a) of Mus musculus (Mouse).